A 281-amino-acid polypeptide reads, in one-letter code: Digeranylgeranylglyceryl phosphate synthase (281 aa).

Helical transmembrane passes span 7–27 (ILRP…ALIT), 32–52 (FSVL…NVIN), 72–91 (GRIS…ALAS), 95–117 (FYLG…YYAW), 128–148 (ITIS…LGEV), 193–213 (ISGV…PSLY), 214–234 (LLGI…AVFL), and 258–278 (VGMA…TALT).

The protein belongs to the UbiA prenyltransferase family. DGGGP synthase subfamily. The cofactor is Mg(2+).

It is found in the cell membrane. It carries out the reaction sn-3-O-(geranylgeranyl)glycerol 1-phosphate + (2E,6E,10E)-geranylgeranyl diphosphate = 2,3-bis-O-(geranylgeranyl)-sn-glycerol 1-phosphate + diphosphate. The protein operates within membrane lipid metabolism; glycerophospholipid metabolism. In terms of biological role, prenyltransferase that catalyzes the transfer of the geranylgeranyl moiety of geranylgeranyl diphosphate (GGPP) to the C2 hydroxyl of (S)-3-O-geranylgeranylglyceryl phosphate (GGGP). This reaction is the second ether-bond-formation step in the biosynthesis of archaeal membrane lipids. This Methanothermobacter thermautotrophicus (strain ATCC 29096 / DSM 1053 / JCM 10044 / NBRC 100330 / Delta H) (Methanobacterium thermoautotrophicum) protein is Digeranylgeranylglyceryl phosphate synthase.